The chain runs to 487 residues: mRNA cleavage and polyadenylation factor CLP1 (487 aa).

Residues glutamate 19, lysine 59, and asparagine 134–threonine 139 each bind ATP.

The protein belongs to the Clp1 family. Clp1 subfamily. In terms of assembly, component of a pre-mRNA cleavage factor complex. Interacts directly with PCF11.

The protein localises to the nucleus. Functionally, required for endonucleolytic cleavage during polyadenylation-dependent pre-mRNA 3'-end formation. The polypeptide is mRNA cleavage and polyadenylation factor CLP1 (Laccaria bicolor (strain S238N-H82 / ATCC MYA-4686) (Bicoloured deceiver)).